Reading from the N-terminus, the 777-residue chain is Homoaconitase, mitochondrial (777 aa).

The N-terminal 35 residues, 1-35 (MFKRTGSLLLRCRASRVPVIGRPLISLSTSSTSLS), are a transit peptide targeting the mitochondrion. The interval 47 to 74 (LRRYTEASSSTTQTSPSSSSWPAPDAAP) is disordered. The span at 52-74 (EASSSTTQTSPSSSSWPAPDAAP) shows a compositional bias: low complexity. Residues Cys398, Cys466, and Cys469 each coordinate [4Fe-4S] cluster.

The protein belongs to the aconitase/IPM isomerase family. Requires [4Fe-4S] cluster as cofactor.

The protein localises to the mitochondrion. The catalysed reaction is (2R,3S)-homoisocitrate = cis-homoaconitate + H2O. The protein operates within amino-acid biosynthesis; L-lysine biosynthesis via AAA pathway; L-alpha-aminoadipate from 2-oxoglutarate: step 3/5. Catalyzes the reversible hydration of cis-homoaconitate to (2R,3S)-homoisocitrate, a step in the alpha-aminoadipate pathway for lysine biosynthesis. This is Homoaconitase, mitochondrial (lys4) from Aspergillus fumigatus (strain ATCC MYA-4609 / CBS 101355 / FGSC A1100 / Af293) (Neosartorya fumigata).